Reading from the N-terminus, the 395-residue chain is Protein BTN1 (395 aa).

Residues 1 to 31 (MQLEPAHLVYAAFWTFGLVNNVLYVVILTAA) form the signal peptide. 10 consecutive transmembrane segments (helical) span residues 43-63 (VVLL…PFFI), 74-94 (LLVG…PLFL), 96-116 (LVGV…FLQL), 134-154 (GAGL…GVSV), 158-178 (LLVF…LLPP), 222-242 (PLVM…YTIN), 261-278 (FRDV…GVFI), 291-311 (IMIP…QSMS), 313-333 (ILPN…LGGA), and 355-375 (LGSV…VSLW).

This sequence belongs to the battenin family.

It localises to the vacuole membrane. Its function is as follows. Involved in vacuolar transport and vacuole pH homeostasis. Also required for cytokinesis. The polypeptide is Protein BTN1 (BTN1) (Yarrowia lipolytica (strain CLIB 122 / E 150) (Yeast)).